The primary structure comprises 182 residues: Biotin carboxyl carrier protein of acetyl-CoA carboxylase (182 aa).

The interval 70 to 95 (AAPSPSPEPGTSRAADHAVTSSGSQP) is disordered. Residues 104-180 (LAEVASPMVG…EYNQPLMRIK (77 aa)) form the Biotinyl-binding domain. The residue at position 146 (Lys-146) is an N6-biotinyllysine.

In terms of assembly, homodimer.

The protein operates within lipid metabolism; fatty acid biosynthesis. This protein is a component of the acetyl coenzyme A carboxylase complex; first, biotin carboxylase catalyzes the carboxylation of the carrier protein and then the transcarboxylase transfers the carboxyl group to form malonyl-CoA. The polypeptide is Biotin carboxyl carrier protein of acetyl-CoA carboxylase (accB) (Nostoc sp. (strain PCC 7120 / SAG 25.82 / UTEX 2576)).